The chain runs to 410 residues: Arginine deiminase (410 aa).

Cysteine 400 (amidino-cysteine intermediate) is an active-site residue.

Belongs to the arginine deiminase family.

The protein resides in the cytoplasm. It carries out the reaction L-arginine + H2O = L-citrulline + NH4(+). The protein operates within amino-acid degradation; L-arginine degradation via ADI pathway; carbamoyl phosphate from L-arginine: step 1/2. This is Arginine deiminase from Streptococcus uberis (strain ATCC BAA-854 / 0140J).